We begin with the raw amino-acid sequence, 62 residues long: UPF0434 protein azo1471 (62 aa).

It belongs to the UPF0434 family.

The polypeptide is UPF0434 protein azo1471 (Azoarcus sp. (strain BH72)).